The primary structure comprises 542 residues: Heterogeneous nuclear ribonucleoprotein L-like (542 aa).

Positions 1 to 71 (MSSSSSSPRE…QPEAGGSHHK (71 aa)) are disordered. Residues 18–29 (YESQAKRLKTEE) are compositionally biased toward basic and acidic residues. Lysine 26 is covalently cross-linked (Glycyl lysine isopeptide (Lys-Gly) (interchain with G-Cter in SUMO2)). The residue at position 35 (serine 35) is a Phosphoserine. The residue at position 46 (threonine 46) is a Phosphothreonine. The segment covering 48-58 (RGGGDGGGGGR) has biased composition (gly residues). Serine 59, serine 68, and serine 75 each carry phosphoserine. 3 consecutive RRM domains span residues 76 to 150 (PVVH…YSTS), 166 to 244 (NKVL…YARP), and 335 to 409 (SVVM…VSKQ). Lysine 491 participates in a covalent cross-link: Glycyl lysine isopeptide (Lys-Gly) (interchain with G-Cter in SUMO2).

Interacts with HNRNPL. As to expression, widely expressed. Detected in bone marrow stroma cells, skeletal muscle, heart, placenta, pancreas, kidney and lung.

In terms of biological role, RNA-binding protein that functions as a regulator of alternative splicing for multiple target mRNAs, including PTPRC/CD45 and STAT5A. Required for alternative splicing of PTPRC. The sequence is that of Heterogeneous nuclear ribonucleoprotein L-like (HNRNPLL) from Homo sapiens (Human).